Reading from the N-terminus, the 122-residue chain is Small ribosomal subunit protein uS13 (122 aa).

The disordered stretch occupies residues 95-122 (GLPVHGQRTHTNARTRKGPRKGAVGKKK).

It belongs to the universal ribosomal protein uS13 family. In terms of assembly, part of the 30S ribosomal subunit. Forms a loose heterodimer with protein S19. Forms two bridges to the 50S subunit in the 70S ribosome.

Its function is as follows. Located at the top of the head of the 30S subunit, it contacts several helices of the 16S rRNA. In the 70S ribosome it contacts the 23S rRNA (bridge B1a) and protein L5 of the 50S subunit (bridge B1b), connecting the 2 subunits; these bridges are implicated in subunit movement. Contacts the tRNAs in the A and P-sites. The chain is Small ribosomal subunit protein uS13 from Lawsonia intracellularis (strain PHE/MN1-00).